A 229-amino-acid chain; its full sequence is UPF0758 protein MM_2791 (229 aa).

Residues 106–228 (KISSPKDVYT…YVSLKDEGFV (123 aa)) enclose the MPN domain. Positions 177, 179, and 190 each coordinate Zn(2+). Positions 177-190 (HNHPSGDPSPSRED) match the JAMM motif motif.

The protein belongs to the UPF0758 family.

The sequence is that of UPF0758 protein MM_2791 from Methanosarcina mazei (strain ATCC BAA-159 / DSM 3647 / Goe1 / Go1 / JCM 11833 / OCM 88) (Methanosarcina frisia).